Here is a 382-residue protein sequence, read N- to C-terminus: S-adenosylmethionine synthase (382 aa).

His-15 lines the ATP pocket. A Mg(2+)-binding site is contributed by Asp-17. A K(+)-binding site is contributed by Glu-43. Glu-56 and Gln-99 together coordinate L-methionine. The segment at 99 to 109 is flexible loop; sequence QSPDINQGVDR. ATP contacts are provided by residues 164–166, 230–231, Asp-239, 245–246, Ala-262, and Lys-266; these read DAK, RF, and RK. L-methionine is bound at residue Asp-239. Lys-270 contacts L-methionine.

Belongs to the AdoMet synthase family. As to quaternary structure, homotetramer; dimer of dimers. It depends on Mg(2+) as a cofactor. K(+) is required as a cofactor.

The protein localises to the cytoplasm. It catalyses the reaction L-methionine + ATP + H2O = S-adenosyl-L-methionine + phosphate + diphosphate. The protein operates within amino-acid biosynthesis; S-adenosyl-L-methionine biosynthesis; S-adenosyl-L-methionine from L-methionine: step 1/1. Its function is as follows. Catalyzes the formation of S-adenosylmethionine (AdoMet) from methionine and ATP. The overall synthetic reaction is composed of two sequential steps, AdoMet formation and the subsequent tripolyphosphate hydrolysis which occurs prior to release of AdoMet from the enzyme. The protein is S-adenosylmethionine synthase of Psychromonas ingrahamii (strain DSM 17664 / CCUG 51855 / 37).